We begin with the raw amino-acid sequence, 379 residues long: Putative beta-glucosidase 6 (379 aa).

Residues 1-20 (MEKTFALITIFLAFAFSGKC) form the signal peptide. Residues Gln43, His141, and 186 to 187 (NE) contribute to the a beta-D-glucoside site. Glu187 functions as the Proton donor in the catalytic mechanism. Cys206 and Cys213 form a disulfide bridge. Asn217 carries an N-linked (GlcNAc...) asparagine glycan. Tyr329 lines the a beta-D-glucoside pocket. The N-linked (GlcNAc...) asparagine glycan is linked to Asn362.

It belongs to the glycosyl hydrolase 1 family.

The enzyme catalyses Hydrolysis of terminal, non-reducing beta-D-glucosyl residues with release of beta-D-glucose.. In Arabidopsis thaliana (Mouse-ear cress), this protein is Putative beta-glucosidase 6.